Here is an 813-residue protein sequence, read N- to C-terminus: MAEKYNPQETEKKWQDKWAADRLYHAGEDSPKPKWYSLTMFPYTSGNLHIGHWYAEVPADCFARYKRLNGFNVMRPVGFDSFGLPAENAAIKHHIHPRIWTLNNVENMRRQLKTIGAMFDWDREVITCLPEYYKWTQWFFLKLYEAGLAYRAKAPVNWCPSCQAVLANEQVVDGTCWRCETPTTRRDLEQWFFRITNYADELKDHDGLDWPEKITAMQRNWVGKSYGAEVSFALDCPAAPEQEIKVFTTRPDTIYGVTFMVLAPEHPLVEKITTPENKAAVDEYIKKSRACTEIERLSTEREKDGVFTGAYVTNRVNGHKVPVWIGDYVLQSYGTGAVMGVPAHDERDFVFAQKYDLPVITVIAPPDYDGQPLEAAYINEGVMQNSGPFNGLPNTEGKEKVCDYLAEHGWGKKTVNYKLRDWLISRQRYWGAPIPMIYCEKCGIVPVPEKDLPVLLPEDVEFRSGGESPLKYNEGFVNTTCPVCGGKAKRETDTMDTFMCSSWYFLRYTSPGYDKGPFDPEKLRYWMPVDLYTGGAEHAVMHLFYSRFFTKALRDMGIIDFGEPFKKLFNQGIIVSNHQKMSKSKGNVVTPDNLVAEVGTDAVRAYLMFVGPWDQGGEWNDSGLSGMSRWLNRVWNLFTEEYTPQTASAEAERELKRTLHQTIKKITMDIERLRFNTVVAALMELSNSLAKFKEAAAVSAESWQNSLKTFALMLAPVAPHIAEELWANLDMEYSIHNQSWPKWDEELAKDEVITLIIQVNGKLRERLEMPAGISEDEAKETALNSTRVKPHLQGKTPASVIYVPGKLVNIVVK.

Positions 42-52 (PYTSGNLHIGH) match the 'HIGH' region motif. The short motif at 580-584 (KMSKS) is the 'KMSKS' region element. Lysine 583 is an ATP binding site.

The protein belongs to the class-I aminoacyl-tRNA synthetase family.

The protein resides in the cytoplasm. The catalysed reaction is tRNA(Leu) + L-leucine + ATP = L-leucyl-tRNA(Leu) + AMP + diphosphate. The chain is Leucine--tRNA ligase from Dehalococcoides mccartyi (strain ATCC BAA-2266 / KCTC 15142 / 195) (Dehalococcoides ethenogenes (strain 195)).